The following is a 610-amino-acid chain: Dopamine beta-hydroxylase (610 aa).

The Cytoplasmic segment spans residues 1 to 9 (MKVPSPSVR). A helical; Signal-anchor for type II membrane protein membrane pass occupies residues 10 to 30 (EAASMYGTAVAIFLVILVAAL). Residues 31–610 (QGSEPPESPF…TVVDIGGGKG (580 aa)) lie on the Intragranular side of the membrane. A DOMON domain is found at 50–166 (GTLELSWNVS…GTVHLVYGIL (117 aa)). 3 N-linked (GlcNAc...) asparagine glycosylation sites follow: N57, N177, and N194. Intrachain disulfides connect C147/C589, C225/C276, C262/C288, C383/C496, C387/C558, and C459/C481. Residue Y223 is part of the active site. Cu(2+) contacts are provided by H255 and H256. 4 residues coordinate Cu(2+): H326, H405, H407, and M480. The active site involves H405. The disordered stretch occupies residues 586–610 (TPRCPASRGRSPAGPTVVDIGGGKG).

It belongs to the copper type II ascorbate-dependent monooxygenase family. As to quaternary structure, homotetramer; composed of two disulfide-linked dimers. Requires Cu(2+) as cofactor. Post-translationally, proteolytic cleavage after the membrane-anchor leads to the release of the soluble form. N-glycosylated. In terms of tissue distribution, detected in adrenal medulla chromaffin cells.

Its subcellular location is the cytoplasmic vesicle. It is found in the secretory vesicle lumen. The protein localises to the secretory vesicle. It localises to the chromaffin granule lumen. The protein resides in the secreted. Its subcellular location is the secretory vesicle membrane. It is found in the chromaffin granule membrane. The catalysed reaction is dopamine + 2 L-ascorbate + O2 = (R)-noradrenaline + 2 monodehydro-L-ascorbate radical + H2O. It participates in catecholamine biosynthesis; (R)-noradrenaline biosynthesis; (R)-noradrenaline from dopamine: step 1/1. Its function is as follows. Catalyzes the hydroxylation of dopamine to noradrenaline (also known as norepinephrine), and is thus vital for regulation of these neurotransmitters. The protein is Dopamine beta-hydroxylase (DBH) of Equus caballus (Horse).